A 463-amino-acid chain; its full sequence is Protein phosphatase PP2A regulatory subunit B (463 aa).

2 WD repeats span residues 27–66 and 87–128; these read TEAD…KGCE and EIEE…LKVV. Residue Ser-134 is modified to Phosphoserine. 4 WD repeats span residues 174–212, 223–263, 282–320, and 337–378; these read AHAY…HSFN, ELTE…LCDN, EIIS…APVK, and ENDC…PGDR.

It belongs to the phosphatase 2A regulatory subunit B family. PP2A exists in several trimeric forms, all of which consist of a core composed of a catalytic subunit associated with a 65 kDa (PR65) (Subunit A) and a 55 kDa (PR55) (Subunit B) regulatory subunit.

Phosphatase 2A affects a variety of biological processes in the cell such as transcription, cell cycle progression and cellular morphogenesis, and provides an initial identification of critical substrates for this phosphatase. The regulatory subunit may direct the catalytic subunit to distinct, albeit overlapping, subsets of substrates. The protein is Protein phosphatase PP2A regulatory subunit B (pab1) of Schizosaccharomyces pombe (strain 972 / ATCC 24843) (Fission yeast).